A 320-amino-acid chain; its full sequence is Polyisoprenyl-teichoic acid--peptidoglycan teichoic acid transferase TagU (320 aa).

The Cytoplasmic segment spans residues 1–15; the sequence is MVSRTERKQHKKRRK. The chain crosses the membrane as a helical; Signal-anchor for type II membrane protein span at residues 16 to 36; that stretch reads WPFWLGGILLVLLLLISGGIF. Residues 37 to 320 are Extracellular-facing; sequence LIYNQVGAVV…SEITGHMQEQ (284 aa).

This sequence belongs to the LytR/CpsA/Psr (LCP) family.

Its subcellular location is the cell membrane. It participates in cell wall biogenesis. In terms of biological role, may catalyze the final step in cell wall teichoic acid biosynthesis, the transfer of the anionic cell wall polymers (APs) from their lipid-linked precursor to the cell wall peptidoglycan (PG). The chain is Polyisoprenyl-teichoic acid--peptidoglycan teichoic acid transferase TagU from Oceanobacillus iheyensis (strain DSM 14371 / CIP 107618 / JCM 11309 / KCTC 3954 / HTE831).